Here is a 143-residue protein sequence, read N- to C-terminus: Holo-[acyl-carrier-protein] synthase (143 aa).

Mg(2+) is bound by residues D9 and E63.

Belongs to the P-Pant transferase superfamily. AcpS family. Mg(2+) serves as cofactor.

The protein localises to the cytoplasm. It catalyses the reaction apo-[ACP] + CoA = holo-[ACP] + adenosine 3',5'-bisphosphate + H(+). Transfers the 4'-phosphopantetheine moiety from coenzyme A to a Ser of acyl-carrier-protein. The sequence is that of Holo-[acyl-carrier-protein] synthase from Burkholderia pseudomallei (strain 668).